A 156-amino-acid chain; its full sequence is Ribosomal RNA large subunit methyltransferase H (156 aa).

Residues Gly104 and 123 to 128 contribute to the S-adenosyl-L-methionine site; that span reads LSALTL.

It belongs to the RNA methyltransferase RlmH family. In terms of assembly, homodimer.

The protein localises to the cytoplasm. The enzyme catalyses pseudouridine(1915) in 23S rRNA + S-adenosyl-L-methionine = N(3)-methylpseudouridine(1915) in 23S rRNA + S-adenosyl-L-homocysteine + H(+). In terms of biological role, specifically methylates the pseudouridine at position 1915 (m3Psi1915) in 23S rRNA. The sequence is that of Ribosomal RNA large subunit methyltransferase H from Nitrosospira multiformis (strain ATCC 25196 / NCIMB 11849 / C 71).